The chain runs to 370 residues: Versatile peroxidase VPS1 (370 aa).

The signal sequence occupies residues 1–20; sequence MAFAKLSAFVLALGATVALG. Positions 21-31 are excised as a propeptide; it reads ESPTHRCLNKR. 4 disulfides stabilise this stretch: C34-C46, C45-C315, C65-C151, and C279-C344. 2 residues coordinate Mn(2+): E67 and E71. H78 (proton acceptor) is an active-site residue. The Ca(2+) site is built by D79, G97, D99, and S101. N133 is a glycosylation site (N-linked (GlcNAc...) asparagine). The active-site Tryptophan radical intermediate is W201. H206 provides a ligand contact to heme b. T207 serves as a coordination point for Ca(2+). 210–214 contacts heme b; sequence AADHV. Position 212 (D212) interacts with Mn(2+). Positions 224, 226, 229, and 231 each coordinate Ca(2+).

Belongs to the peroxidase family. Ligninase subfamily. The cofactor is heme b. It depends on Ca(2+) as a cofactor.

It is found in the secreted. It carries out the reaction 1-(4-hydroxy-3-methoxyphenyl)-2-(2-methoxyphenoxy)propane-1,3-diol + H2O2 = guaiacol + vanillin + glycolaldehyde + H2O. The catalysed reaction is 2 Mn(2+) + H2O2 + 2 H(+) = 2 Mn(3+) + 2 H2O. Functionally, a versatile ligninolytic peroxidase that combines the substrate specificity characteristics of the two other ligninolytic peroxidases, manganese peroxidase and lignin peroxidase. In Pleurotus eryngii (Boletus of the steppes), this protein is Versatile peroxidase VPS1 (vps1).